The sequence spans 215 residues: Probable phosphoglycerate mutase GpmB (215 aa).

Substrate-binding positions include 8–15, 21–22, Arg58, Arg60, 82–85, 104–105, and 151–152; these read RHGETQWN, QG, ELDM, RR, and GI. His9 acts as the Tele-phosphohistidine intermediate in catalysis. Residue Glu82 is the Proton donor/acceptor of the active site.

Belongs to the phosphoglycerate mutase family. GpmB subfamily.

The catalysed reaction is (2R)-2-phosphoglycerate = (2R)-3-phosphoglycerate. Its pathway is carbohydrate degradation; glycolysis; pyruvate from D-glyceraldehyde 3-phosphate: step 3/5. The sequence is that of Probable phosphoglycerate mutase GpmB from Citrobacter koseri (strain ATCC BAA-895 / CDC 4225-83 / SGSC4696).